A 229-amino-acid chain; its full sequence is Cilia- and flagella-associated protein 95 (229 aa).

The Extracellular segment spans residues 1–123 (MDSLDRSCQD…LLNEETVSSG (123 aa)). N-linked (GlcNAc...) asparagine glycosylation occurs at Asn-75. Residues 124–140 (IIERVTGLPATGFGAVF) traverse the membrane as a helical segment. At 141-229 (PRHPPDWSKM…PLTSGPIVPI (89 aa)) the chain is on the cytoplasmic side. Residues 153 to 163 (LTTYSEDYVPP) are mn.

As to quaternary structure, microtubule inner protein component of sperm flagellar doublet microtubules. Interacts with MYH9. Interacts with MYH10. Expressed in undifferentiated embryonic stem cells. Expressed in airway epithelial cells.

It localises to the cytoplasm. The protein localises to the cytoskeleton. The protein resides in the cilium axoneme. Its subcellular location is the flagellum axoneme. It is found in the cell membrane. Its function is as follows. Microtubule inner protein (MIP) part of the dynein-decorated doublet microtubules (DMTs) in cilia axoneme, which is required for motile cilia beating. This chain is Cilia- and flagella-associated protein 95, found in Homo sapiens (Human).